We begin with the raw amino-acid sequence, 609 residues long: Glutamine--fructose-6-phosphate aminotransferase [isomerizing] (609 aa).

The active-site Nucleophile; for GATase activity is the Cys2. Positions 2-217 constitute a Glutamine amidotransferase type-2 domain; that stretch reads CGIVGYIGRR…EGWLAELTPE (216 aa). 2 SIS domains span residues 286-425 and 458-599; these read SAAE…QNGR and AAEA…VDKP. Lys604 (for Fru-6P isomerization activity) is an active-site residue.

As to quaternary structure, homodimer.

The protein localises to the cytoplasm. It carries out the reaction D-fructose 6-phosphate + L-glutamine = D-glucosamine 6-phosphate + L-glutamate. Its function is as follows. Catalyzes the first step in hexosamine metabolism, converting fructose-6P into glucosamine-6P using glutamine as a nitrogen source. This is Glutamine--fructose-6-phosphate aminotransferase [isomerizing] from Symbiobacterium thermophilum (strain DSM 24528 / JCM 14929 / IAM 14863 / T).